A 456-amino-acid chain; its full sequence is Hydroxymethylglutaryl coenzyme A synthase (456 aa).

Residue A34 participates in (3S)-3-hydroxy-3-methylglutaryl-CoA binding. E85 acts as the Proton donor/acceptor in catalysis. Positions 119, 161, 211, 258, 267, 335, and 369 each coordinate (3S)-3-hydroxy-3-methylglutaryl-CoA. The active-site Acyl-thioester intermediate is C119. Catalysis depends on H258, which acts as the Proton donor/acceptor.

This sequence belongs to the thiolase-like superfamily. HMG-CoA synthase family.

The catalysed reaction is acetoacetyl-CoA + acetyl-CoA + H2O = (3S)-3-hydroxy-3-methylglutaryl-CoA + CoA + H(+). Functionally, HMG-CoA synthase; part of the gene cluster that mediates the biosynthesis of 1233A, a natural compound known as an inhibitor of HMG-CoA synthase in the mevalonate pathway and with antibacterial and antifungal activities. This enzyme condenses acetyl-CoA with acetoacetyl-CoA to form HMG-CoA, which is the substrate for HMG-CoA reductase. As part of the 1233A biosynthesis cluster, is involved in conferring self-resistance to 1233A. The protein is Hydroxymethylglutaryl coenzyme A synthase of Fusarium sp.